The sequence spans 333 residues: DnaJ homolog subfamily C member 25 homolog (333 aa).

Residues Leu-8–Gly-28 form a helical membrane-spanning segment. Positions Asn-31–Leu-99 constitute a J domain. Residues Val-123–Trp-143 form a helical membrane-spanning segment. Positions Lys-158 to Gly-208 form a coiled coil. Residues Val-218–Ala-238 form a helical membrane-spanning segment.

This sequence belongs to the DNAJC25 family.

It localises to the membrane. This Drosophila melanogaster (Fruit fly) protein is DnaJ homolog subfamily C member 25 homolog.